We begin with the raw amino-acid sequence, 688 residues long: DNA-directed RNA polymerase subunit beta' (688 aa).

4 residues coordinate Zn(2+): C69, C71, C87, and C90. 3 residues coordinate Mg(2+): D497, D499, and D501.

This sequence belongs to the RNA polymerase beta' chain family. RpoC1 subfamily. As to quaternary structure, in plastids the minimal PEP RNA polymerase catalytic core is composed of four subunits: alpha, beta, beta', and beta''. When a (nuclear-encoded) sigma factor is associated with the core the holoenzyme is formed, which can initiate transcription. Requires Mg(2+) as cofactor. The cofactor is Zn(2+).

Its subcellular location is the plastid. The protein localises to the chloroplast. The catalysed reaction is RNA(n) + a ribonucleoside 5'-triphosphate = RNA(n+1) + diphosphate. DNA-dependent RNA polymerase catalyzes the transcription of DNA into RNA using the four ribonucleoside triphosphates as substrates. This chain is DNA-directed RNA polymerase subunit beta', found in Sinapis alba (White mustard).